We begin with the raw amino-acid sequence, 407 residues long: Probable tRNA pseudouridine synthase D (407 aa).

Aspartate 81 (nucleophile) is an active-site residue. One can recognise a TRUD domain in the interval 151-372 (GFPNYFGIQR…PGGRRELLIR (222 aa)).

Belongs to the pseudouridine synthase TruD family.

It catalyses the reaction uridine(13) in tRNA = pseudouridine(13) in tRNA. Its function is as follows. Could be responsible for synthesis of pseudouridine from uracil-13 in transfer RNAs. This is Probable tRNA pseudouridine synthase D from Pyrococcus furiosus (strain ATCC 43587 / DSM 3638 / JCM 8422 / Vc1).